The primary structure comprises 443 residues: Magnesium transporter MRS2-10 (443 aa).

Residues 1 to 33 (MSELKERLLPPRPASAINLRGDAGSRPSPSGRQ) are disordered. The next 2 membrane-spanning stretches (helical) occupy residues 379-399 (LLLT…GIFG) and 415-435 (WVLA…LWYY). The short motif at 399–401 (GMN) is the Required for magnesium transport activity element.

Belongs to the CorA metal ion transporter (MIT) (TC 1.A.35.5) family. Expressed in the whole plant.

It localises to the cell membrane. In terms of biological role, high-affinity magnesium transporter that mediates the influx of magnesium. Involved in tolerance to Aluminum. This chain is Magnesium transporter MRS2-10 (MRS2-10), found in Arabidopsis thaliana (Mouse-ear cress).